We begin with the raw amino-acid sequence, 930 residues long: Isoleucine--tRNA ligase (930 aa).

A 'HIGH' region motif is present at residues 57-67; sequence PYANGNIHVGH. L-isoleucyl-5'-AMP is bound at residue E554. The 'KMSKS' region signature appears at 595 to 599; sequence KMSKS. Residue K598 coordinates ATP.

The protein belongs to the class-I aminoacyl-tRNA synthetase family. IleS type 1 subfamily. As to quaternary structure, monomer.

Its subcellular location is the cytoplasm. The enzyme catalyses tRNA(Ile) + L-isoleucine + ATP = L-isoleucyl-tRNA(Ile) + AMP + diphosphate. In terms of biological role, catalyzes the attachment of isoleucine to tRNA(Ile). As IleRS can inadvertently accommodate and process structurally similar amino acids such as valine, to avoid such errors it has two additional distinct tRNA(Ile)-dependent editing activities. One activity is designated as 'pretransfer' editing and involves the hydrolysis of activated Val-AMP. The other activity is designated 'posttransfer' editing and involves deacylation of mischarged Val-tRNA(Ile). The sequence is that of Isoleucine--tRNA ligase from Streptococcus agalactiae serotype Ia (strain ATCC 27591 / A909 / CDC SS700).